Here is a 120-residue protein sequence, read N- to C-terminus: uncharacterized protein (120 aa).

Its subcellular location is the mitochondrion. This is an uncharacterized protein from Arabidopsis thaliana (Mouse-ear cress).